The primary structure comprises 137 residues: Probable 4-amino-4-deoxy-L-arabinose-phosphoundecaprenol flippase subunit ArnF (137 aa).

Over 1-3 (MNA) the chain is Cytoplasmic. Residues 4–24 (LRGWLAALGSMLLASAAQLGM) traverse the membrane as a helical segment. The Periplasmic portion of the chain corresponds to 25–44 (RWGMSRLPLPEAWAGQTPER). Residues 45-65 (AALLAVALAVAAYAASLLCWL) form a helical membrane-spanning segment. Residues 66-76 (AALRHLPLGRA) are Cytoplasmic-facing. A helical transmembrane segment spans residues 77 to 97 (YSLLSASYALVYLLAASLPAF). Residues 98 to 100 (DET) lie on the Periplasmic side of the membrane. A helical membrane pass occupies residues 101–121 (FSTSKILGVGLVVLGVLTVNA). The Cytoplasmic segment spans residues 122–137 (RRTAAAPAHHPSRKAP).

It belongs to the ArnF family. As to quaternary structure, heterodimer of ArnE and ArnF.

It is found in the cell inner membrane. Its pathway is bacterial outer membrane biogenesis; lipopolysaccharide biosynthesis. In terms of biological role, translocates 4-amino-4-deoxy-L-arabinose-phosphoundecaprenol (alpha-L-Ara4N-phosphoundecaprenol) from the cytoplasmic to the periplasmic side of the inner membrane. The chain is Probable 4-amino-4-deoxy-L-arabinose-phosphoundecaprenol flippase subunit ArnF from Pseudomonas aeruginosa (strain LESB58).